The sequence spans 122 residues: Large ribosomal subunit protein bL12 (122 aa).

Belongs to the bacterial ribosomal protein bL12 family. In terms of assembly, homodimer. Part of the ribosomal stalk of the 50S ribosomal subunit. Forms a multimeric L10(L12)X complex, where L10 forms an elongated spine to which 2 to 4 L12 dimers bind in a sequential fashion. Binds GTP-bound translation factors.

Its function is as follows. Forms part of the ribosomal stalk which helps the ribosome interact with GTP-bound translation factors. Is thus essential for accurate translation. The sequence is that of Large ribosomal subunit protein bL12 from Blochmanniella pennsylvanica (strain BPEN).